The following is a 428-amino-acid chain: Metal tolerance protein 10 (428 aa).

The Cytoplasmic segment spans residues 1-140; the sequence is MPLNSYIFFL…EMKKLAKSER (140 aa). The helical transmembrane segment at 141–161 threads the bilayer; it reads LAVHISNATNLVLFVAKVYAS. The Vacuolar portion of the chain corresponds to 162-167; it reads MESRSM. A helical transmembrane segment spans residues 168-188; it reads AVIASTLDSLLDLLSGFILWF. Over 189 to 209 the chain is Cytoplasmic; that stretch reads TANAMRKPNQFHYPIGKRRMQ. Residues 210-230 traverse the membrane as a helical segment; it reads PVGIIVFASVMATLGLQVLLE. Residues 231 to 248 are Vacuolar-facing; it reads SGRQLVAKSGIHMNSTEE. Residues 249-269 form a helical membrane-spanning segment; it reads KWMIGIMVSVTIVKFLLMLYC. At 270 to 287 the chain is on the cytoplasmic side; the sequence is RGFQNEIVRAYAQDHLFD. The chain crosses the membrane as a helical span at residues 288–308; sequence VVTNSIGLATAVLAVKFYWWI. The Vacuolar segment spans residues 309–311; the sequence is DPT. A helical transmembrane segment spans residues 312 to 332; the sequence is GAILIALYTIATWARTVLENV. Residues 333 to 428 lie on the Cytoplasmic side of the membrane; that stretch reads HSLIGRSAPP…FTHRPEHKCN (96 aa).

The protein belongs to the cation diffusion facilitator (CDF) transporter (TC 2.A.4) family. SLC30A subfamily.

It localises to the vacuole membrane. In terms of biological role, involved in sequestration of excess metal in the cytoplasm into vacuoles to maintain metal homeostasis. This is Metal tolerance protein 10 (MTP10) from Arabidopsis thaliana (Mouse-ear cress).